The chain runs to 521 residues: Cytochrome P450 monooxygenase astF (521 aa).

Residues 14–34 (TMATFLLPVAIGTIILLFLYG) form a helical membrane-spanning segment. Residues Asn198, Asn218, Asn268, and Asn281 are each glycosylated (N-linked (GlcNAc...) asparagine). Cys430 contacts heme.

This sequence belongs to the cytochrome P450 family. It depends on heme as a cofactor.

It is found in the membrane. The protein operates within secondary metabolite biosynthesis; terpenoid biosynthesis. Functionally, cytochrome P450 monooxygenase; part of the gene cluster that mediates the biosynthesis of astellolides, drimane-type sesquiterpene esters that show antimicrobial, anti-inflammatory, and anti-tumor activities. The first step in astellolide biosynthesis is performed by the sesquiterpene cyclase astC that catalyzes the formation of drimanyl pyrophosphate from farnesyl pyrophosphate. Drimanyl pyrophosphate is then dephosphorylated by the sesquiterpene phosphatase astI to produce drimanyl monophosphate which is further dephosphorylated to drim-8-ene-11-ol by atsK. Drim-8-ene-11-ol is converted to confertifolin, probably by the cytochrome P450 monooxygenase astD and/or the dehydrogenase astE. The cytochrome P450 monooxygenases astB, astF and astJ then hydroxylate confertifolin at C6, C14, or C15 to form trihydroxy confertifolin. The nonribosomal peptide synthetase astA catalyzes ester bond formation between trihydroxy contifolin and benzoic acid (BA) or 4-hydroxy benzoic acid (4HBA), leading to the formation of dideacetyl astellolides A and B, respectively. Finally, the O-acetyltransferase astG converts dideacetyl astellolides A and B into deacetyl astellolides A and B. The sequence is that of Cytochrome P450 monooxygenase astF from Aspergillus oryzae (strain ATCC 42149 / RIB 40) (Yellow koji mold).